The primary structure comprises 262 residues: MEIAQALILGIVQGLTEWLPISSSGHLVLLQIILLSRSSAAFIALVHAGTLLAVIVAFRRDVFNVIKSFLEGISELPKGSAFSSPERKLPLYILIGTVPVAVLGLALAKYVDEIFGSSKIVGVGLLITAALLYSTKWAGGERPLDLRRALIVGLAQSIAIFPGISRSGATISTALLSGLKREEAIRYSFLLSIPALTGFLILELIVSPAHEILNPEGLVGLLSSFITGLIAIKFLLSIIRRGRLHLFSYYCVIVGIAILSLL.

8 helical membrane passes run 15-35 (LTEW…IILL), 38-58 (SSAA…IVAF), 91-111 (LYIL…AKYV), 114-134 (IFGS…LLYS), 149-169 (ALIV…RSGA), 189-209 (FLLS…VSPA), 219-239 (VGLL…LSII), and 242-262 (GRLH…LSLL).

It belongs to the UppP family.

Its subcellular location is the cell membrane. The catalysed reaction is di-trans,octa-cis-undecaprenyl diphosphate + H2O = di-trans,octa-cis-undecaprenyl phosphate + phosphate + H(+). Catalyzes the dephosphorylation of undecaprenyl diphosphate (UPP). In Korarchaeum cryptofilum (strain OPF8), this protein is Undecaprenyl-diphosphatase.